Here is a 190-residue protein sequence, read N- to C-terminus: Potassium-transporting ATPase KdpC subunit (190 aa).

A helical transmembrane segment spans residues 13–33; sequence IGFLLLTLVCGVLYPGVVTVF.

Belongs to the KdpC family. As to quaternary structure, the system is composed of three essential subunits: KdpA, KdpB and KdpC.

It localises to the cell membrane. Part of the high-affinity ATP-driven potassium transport (or Kdp) system, which catalyzes the hydrolysis of ATP coupled with the electrogenic transport of potassium into the cytoplasm. This subunit acts as a catalytic chaperone that increases the ATP-binding affinity of the ATP-hydrolyzing subunit KdpB by the formation of a transient KdpB/KdpC/ATP ternary complex. This is Potassium-transporting ATPase KdpC subunit from Listeria monocytogenes serovar 1/2a (strain ATCC BAA-679 / EGD-e).